A 615-amino-acid polypeptide reads, in one-letter code: Aldehyde oxidase GLOX1 (615 aa).

Positions 1-25 (MKKSTRLLWLLSIIVLVAAVSKAVA) are cleaved as a signal peptide. The N-linked (GlcNAc...) asparagine glycan is linked to Asn-35. Residues 70-89 (PPKAGKGKGKGKGRGTVAAG) form a disordered region. Over residues 72 to 82 (KAGKGKGKGKG) the composition is skewed to basic residues. Asn-187 and Asn-297 each carry an N-linked (GlcNAc...) asparagine glycan.

It localises to the secreted. It carries out the reaction an aldehyde + O2 + H2O = a carboxylate + H2O2 + H(+). Functionally, catalyzes the oxidation of aldehydes to the corresponding carboxylate by coupling the reaction to the reduction of dioxygen to hydrogen peroxide. Substrates include glyoxal and other aldehydes. May be regulated by the transcription factor MYB80 during anther development and play a role in tapetum and pollen development. The sequence is that of Aldehyde oxidase GLOX1 from Arabidopsis thaliana (Mouse-ear cress).